Consider the following 191-residue polypeptide: Akirin-1 (191 aa).

The disordered stretch occupies residues 17–70 (LLSPGSPKRRRCAPLPGPTPGLRPPDAEPPPLQMQTPPASLQQPAPPGSERRLP). Ser22 carries the post-translational modification Phosphoserine. A Nuclear localization signal motif is present at residues 23-28 (PKRRRC). Over residues 31 to 48 (LPGPTPGLRPPDAEPPPL) the composition is skewed to pro residues. The segment covering 49–59 (QMQTPPASLQQ) has biased composition (polar residues). A Phosphothreonine modification is found at Thr71. An SYVS motif motif is present at residues 188-191 (SYVS).

Belongs to the akirin family. As to expression, expressed in macrophages and satellite cells.

The protein localises to the nucleus. Molecular adapter that acts as a bridge between proteins, and which is involved skeletal muscle development. Functions as a signal transducer for MSTN during skeletal muscle regeneration and myogenesis. May regulate chemotaxis of both macrophages and myoblasts by reorganising actin cytoskeleton, leading to more efficient lamellipodia formation via a PI3 kinase dependent pathway. In contrast to AKIRIN2, not involved in nuclear import of proteasomes. The polypeptide is Akirin-1 (Mus musculus (Mouse)).